The chain runs to 122 residues: Probable glycine cleavage system H protein (122 aa).

One can recognise a Lipoyl-binding domain in the interval 23 to 104 (IATVGITDYA…PYGNWLVKMK (82 aa)). N6-lipoyllysine is present on K64.

This sequence belongs to the GcvH family. In terms of assembly, the glycine cleavage system is composed of four proteins: P, T, L and H. (R)-lipoate serves as cofactor.

The glycine cleavage system catalyzes the degradation of glycine. The H protein shuttles the methylamine group of glycine from the P protein to the T protein. The protein is Probable glycine cleavage system H protein of Thermoplasma volcanium (strain ATCC 51530 / DSM 4299 / JCM 9571 / NBRC 15438 / GSS1).